Reading from the N-terminus, the 23-residue chain is Acidic phospholipase A2 Ts-A2 (23 aa).

Ca(2+) serves as cofactor. Contains 7 disulfide bonds. In terms of tissue distribution, expressed by the venom gland.

The protein resides in the secreted. It catalyses the reaction a 1,2-diacyl-sn-glycero-3-phosphocholine + H2O = a 1-acyl-sn-glycero-3-phosphocholine + a fatty acid + H(+). Functionally, exhibits moderate hydrolytic activities and prefers the anionic micelles (dPPC with deoxycholate) to the zwitterionic micelles (dPPC with Triton X-100). PLA2 catalyzes the calcium-dependent hydrolysis of the 2-acyl groups in 3-sn-phosphoglycerides. This chain is Acidic phospholipase A2 Ts-A2, found in Trimeresurus stejnegeri (Chinese green tree viper).